The chain runs to 344 residues: Sensor histidine kinase GraS (344 aa).

Transmembrane regions (helical) follow at residues 18–38 (IFWIVFLHLILLGMAYIDYDI) and 43–63 (IGFIVTLNLGLTAMFLIFTFL). A Histidine kinase domain is found at 126-332 (EFVHDIKTPV…TFVLTFPKQN (207 aa)). His-129 carries the phosphohistidine; by autocatalysis modification.

In terms of processing, autophosphorylated.

It is found in the cell membrane. It catalyses the reaction ATP + protein L-histidine = ADP + protein N-phospho-L-histidine.. In terms of biological role, member of the two-component regulatory system GraR/GraS involved in resistance against cationic antimicrobial peptides (CAMPs). GraS probably functions as a sensor protein kinase which is autophosphorylated at a histidine residue and transfers its phosphate group to GraR. This chain is Sensor histidine kinase GraS (graS), found in Staphylococcus haemolyticus (strain JCSC1435).